Consider the following 130-residue polypeptide: UPF0102 protein RPE_0358 (130 aa).

Belongs to the UPF0102 family.

This Rhodopseudomonas palustris (strain BisA53) protein is UPF0102 protein RPE_0358.